Reading from the N-terminus, the 276-residue chain is Non-homologous end joining protein Ku (276 aa).

One can recognise a Ku domain in the interval 11–177 (ISFGLVHIPI…PEEIRSMEPL (167 aa)). Positions 256–276 (QVKTQQKKEAAPKKERRRKTS) are disordered.

This sequence belongs to the prokaryotic Ku family. In terms of assembly, homodimer. Interacts with LigD.

Its function is as follows. With LigD forms a non-homologous end joining (NHEJ) DNA repair enzyme, which repairs dsDNA breaks with reduced fidelity. Binds linear dsDNA with 5'- and 3'- overhangs but not closed circular dsDNA nor ssDNA. Recruits and stimulates the ligase activity of LigD. This Heliobacterium modesticaldum (strain ATCC 51547 / Ice1) protein is Non-homologous end joining protein Ku.